A 437-amino-acid chain; its full sequence is GTPase Obg (437 aa).

Positions 2–160 (SLFLDTARIE…KILLLELRVL (159 aa)) constitute an Obg domain. The OBG-type G domain occupies 161 to 338 (ADVGLVGFPS…LLARTSELLA (178 aa)). GTP-binding positions include 167 to 174 (GFPSVGKS), 192 to 196 (FTTIT), 214 to 217 (DMPG), 284 to 287 (NKMD), and 319 to 321 (SGL). Mg(2+) is bound by residues S174 and T194. The 79-residue stretch at 359-437 (GFEDEEKPFK…IQKFEFEFVD (79 aa)) folds into the OCT domain.

Belongs to the TRAFAC class OBG-HflX-like GTPase superfamily. OBG GTPase family. As to quaternary structure, monomer. Mg(2+) serves as cofactor.

It is found in the cytoplasm. Its function is as follows. An essential GTPase which binds GTP, GDP and possibly (p)ppGpp with moderate affinity, with high nucleotide exchange rates and a fairly low GTP hydrolysis rate. Plays a role in control of the cell cycle, stress response, ribosome biogenesis and in those bacteria that undergo differentiation, in morphogenesis control. The protein is GTPase Obg of Lactococcus lactis subsp. cremoris (strain SK11).